A 93-amino-acid polypeptide reads, in one-letter code: U11-ctenitoxin-Pn1a (93 aa).

The first 21 residues, 1-21 (MKCAVLFLSVIALVHIFVVEA), serve as a signal peptide directing secretion. Positions 22–34 (EEEPDSDALVPQE) are excised as a propeptide. 5 cysteine pairs are disulfide-bonded: C37–C51, C44–C57, C50–C75, C59–C73, and C83–C90.

The protein belongs to the neurotoxin 09 (Tx3-6) family. In terms of tissue distribution, expressed by the venom gland.

Its subcellular location is the secreted. Functionally, probable neurotoxin. This is U11-ctenitoxin-Pn1a from Phoneutria nigriventer (Brazilian armed spider).